A 217-amino-acid chain; its full sequence is ATP-dependent Clp protease proteolytic subunit (217 aa).

Catalysis depends on S120, which acts as the Nucleophile. H145 is a catalytic residue.

It belongs to the peptidase S14 family. As to quaternary structure, fourteen ClpP subunits assemble into 2 heptameric rings which stack back to back to give a disk-like structure with a central cavity, resembling the structure of eukaryotic proteasomes.

The protein localises to the cytoplasm. The catalysed reaction is Hydrolysis of proteins to small peptides in the presence of ATP and magnesium. alpha-casein is the usual test substrate. In the absence of ATP, only oligopeptides shorter than five residues are hydrolyzed (such as succinyl-Leu-Tyr-|-NHMec, and Leu-Tyr-Leu-|-Tyr-Trp, in which cleavage of the -Tyr-|-Leu- and -Tyr-|-Trp bonds also occurs).. Functionally, cleaves peptides in various proteins in a process that requires ATP hydrolysis. Has a chymotrypsin-like activity. Plays a major role in the degradation of misfolded proteins. In Ralstonia nicotianae (strain ATCC BAA-1114 / GMI1000) (Ralstonia solanacearum), this protein is ATP-dependent Clp protease proteolytic subunit.